The chain runs to 283 residues: NAD kinase (283 aa).

Asp-68 acts as the Proton acceptor in catalysis. NAD(+)-binding positions include Asp-68–Gly-69, Asn-142–Asp-143, Arg-153, Asp-172, Thr-183–Ser-188, and Gln-242.

Belongs to the NAD kinase family. The cofactor is a divalent metal cation.

The protein localises to the cytoplasm. The enzyme catalyses NAD(+) + ATP = ADP + NADP(+) + H(+). Involved in the regulation of the intracellular balance of NAD and NADP, and is a key enzyme in the biosynthesis of NADP. Catalyzes specifically the phosphorylation on 2'-hydroxyl of the adenosine moiety of NAD to yield NADP. The polypeptide is NAD kinase (Caldanaerobacter subterraneus subsp. tengcongensis (strain DSM 15242 / JCM 11007 / NBRC 100824 / MB4) (Thermoanaerobacter tengcongensis)).